The primary structure comprises 280 residues: MGGWIDEEHRGVRYGLAGDVLVEETSPFQRISVIRSERYGKGLLLDGCWMTAEQQERHYHEALVHPALCSAEAIERVLVIGGGDGGTARECLRYPEVIHLDLVEIDGRVVELSQEHLPGIGGAVWSDSRCQLTVGDGIAWAANAPDQSYDVVLVDGSDPAGPAEGLFNRAFFEHCRRILKPGGVFATQSESPEAFREVHVAMVRLLREVFGHADPLYGWVPMYPSGWWSWTFAAVDGPRYRTVQPARAALVAEGCEIWSPRWQQGALDAVPAFIARELAP.

Residues 2–235 (GGWIDEEHRG…GWWSWTFAAV (234 aa)) form the PABS domain. S-methyl-5'-thioadenosine is bound at residue Gln-29. Positions 60 and 84 each coordinate spermidine. S-methyl-5'-thioadenosine contacts are provided by residues Glu-104 and 136 to 137 (DG). Asp-155 functions as the Proton acceptor in the catalytic mechanism. Residue Pro-162 coordinates S-methyl-5'-thioadenosine.

This sequence belongs to the spermidine/spermine synthase family. Homodimer or homotetramer.

It is found in the cytoplasm. It catalyses the reaction S-adenosyl 3-(methylsulfanyl)propylamine + putrescine = S-methyl-5'-thioadenosine + spermidine + H(+). The protein operates within amine and polyamine biosynthesis; spermidine biosynthesis; spermidine from putrescine: step 1/1. Functionally, catalyzes the irreversible transfer of a propylamine group from the amino donor S-adenosylmethioninamine (decarboxy-AdoMet) to putrescine (1,4-diaminobutane) to yield spermidine. This chain is Polyamine aminopropyltransferase, found in Parasynechococcus marenigrum (strain WH8102).